The sequence spans 214 residues: Adenylate kinase (214 aa).

14 to 19 (GSGKGT) contributes to the ATP binding site. Positions 32-61 (SVGKVLRTVMESNTAEADVVKKFIKSGKLV) are NMP. Residues Arg38, 59-61 (KLV), 87-90 (GYPR), and Gln94 each bind AMP. Residues 124-162 (GRISCTDCGTIYNKLYCMPKINGVCDICNSSSFQNRVDD) form an LID region. Residue Arg125 coordinates ATP. Zn(2+)-binding residues include Cys128 and Cys131. 134–135 (IY) is a binding site for ATP. Residues Cys148 and Cys151 each coordinate Zn(2+). Positions 159 and 170 each coordinate AMP. ATP is bound at residue Gln198.

Belongs to the adenylate kinase family. As to quaternary structure, monomer.

It is found in the cytoplasm. The enzyme catalyses AMP + ATP = 2 ADP. It functions in the pathway purine metabolism; AMP biosynthesis via salvage pathway; AMP from ADP: step 1/1. In terms of biological role, catalyzes the reversible transfer of the terminal phosphate group between ATP and AMP. Plays an important role in cellular energy homeostasis and in adenine nucleotide metabolism. This chain is Adenylate kinase, found in Orientia tsutsugamushi (strain Ikeda) (Rickettsia tsutsugamushi).